Reading from the N-terminus, the 248-residue chain is 2,3-bisphosphoglycerate-dependent phosphoglycerate mutase (248 aa).

Residues 8–15, 21–22, R60, 87–90, K98, 114–115, and 183–184 each bind substrate; these read RHGESLWN, TG, ERHY, RR, and GN. Catalysis depends on H9, which acts as the Tele-phosphohistidine intermediate. E87 (proton donor/acceptor) is an active-site residue.

The protein belongs to the phosphoglycerate mutase family. BPG-dependent PGAM subfamily.

It catalyses the reaction (2R)-2-phosphoglycerate = (2R)-3-phosphoglycerate. The protein operates within carbohydrate degradation; glycolysis; pyruvate from D-glyceraldehyde 3-phosphate: step 3/5. Its function is as follows. Catalyzes the interconversion of 2-phosphoglycerate and 3-phosphoglycerate. This is 2,3-bisphosphoglycerate-dependent phosphoglycerate mutase from Methanospirillum hungatei JF-1 (strain ATCC 27890 / DSM 864 / NBRC 100397 / JF-1).